We begin with the raw amino-acid sequence, 101 residues long: RNA-binding protein Hfq (101 aa).

One can recognise a Sm domain in the interval 9 to 68; that stretch reads DPFLNALRRERVPVSIYLVNGIKLQGQVESFDQFVILLKNTVSQMVYKHAISTVVPSRPV. The tract at residues 63-101 is disordered; it reads VPSRPVSHHSNNPSGSTNNYHGSNPSAPQQPQQDSDDAE. The segment covering 70–86 has biased composition (polar residues); it reads HHSNNPSGSTNNYHGSN.

The protein belongs to the Hfq family. Homohexamer.

Its function is as follows. RNA chaperone that binds small regulatory RNA (sRNAs) and mRNAs to facilitate mRNA translational regulation in response to envelope stress, environmental stress and changes in metabolite concentrations. Also binds with high specificity to tRNAs. Positively regulates the expression of the yst gene for heat-stable enterotoxin (Y-ST). The polypeptide is RNA-binding protein Hfq (Yersinia enterocolitica).